A 301-amino-acid polypeptide reads, in one-letter code: Acetylglutamate kinase (301 aa).

Residues 68 to 69 (GG), arginine 90, and asparagine 195 each bind substrate.

Belongs to the acetylglutamate kinase family. ArgB subfamily.

Its subcellular location is the cytoplasm. The enzyme catalyses N-acetyl-L-glutamate + ATP = N-acetyl-L-glutamyl 5-phosphate + ADP. Its pathway is amino-acid biosynthesis; L-arginine biosynthesis; N(2)-acetyl-L-ornithine from L-glutamate: step 2/4. In terms of biological role, catalyzes the ATP-dependent phosphorylation of N-acetyl-L-glutamate. The protein is Acetylglutamate kinase of Pseudomonas fluorescens (strain Pf0-1).